The primary structure comprises 395 residues: Phosphoglycerate kinase (395 aa).

Substrate contacts are provided by residues 22 to 24, Arg-37, 60 to 63, Arg-116, and Arg-149; these read DLN and HFGR. Residues Lys-199, Glu-322, and 352-355 contribute to the ATP site; that span reads GGDT.

Belongs to the phosphoglycerate kinase family. As to quaternary structure, monomer.

Its subcellular location is the cytoplasm. The enzyme catalyses (2R)-3-phosphoglycerate + ATP = (2R)-3-phospho-glyceroyl phosphate + ADP. Its pathway is carbohydrate degradation; glycolysis; pyruvate from D-glyceraldehyde 3-phosphate: step 2/5. The sequence is that of Phosphoglycerate kinase from Novosphingobium aromaticivorans (strain ATCC 700278 / DSM 12444 / CCUG 56034 / CIP 105152 / NBRC 16084 / F199).